The chain runs to 143 residues: Nucleoside diphosphate kinase (143 aa).

Lys11, Phe59, Arg87, Thr93, Arg104, and Asn114 together coordinate ATP. His117 serves as the catalytic Pros-phosphohistidine intermediate.

It belongs to the NDK family. In terms of assembly, homotetramer. The cofactor is Mg(2+).

The protein localises to the cytoplasm. The enzyme catalyses a 2'-deoxyribonucleoside 5'-diphosphate + ATP = a 2'-deoxyribonucleoside 5'-triphosphate + ADP. The catalysed reaction is a ribonucleoside 5'-diphosphate + ATP = a ribonucleoside 5'-triphosphate + ADP. In terms of biological role, major role in the synthesis of nucleoside triphosphates other than ATP. The ATP gamma phosphate is transferred to the NDP beta phosphate via a ping-pong mechanism, using a phosphorylated active-site intermediate. In Salmonella arizonae (strain ATCC BAA-731 / CDC346-86 / RSK2980), this protein is Nucleoside diphosphate kinase.